We begin with the raw amino-acid sequence, 100 residues long: Small ribosomal subunit protein uS14 (100 aa).

This sequence belongs to the universal ribosomal protein uS14 family. In terms of assembly, part of the 30S ribosomal subunit. Contacts proteins S3 and S10.

Functionally, binds 16S rRNA, required for the assembly of 30S particles and may also be responsible for determining the conformation of the 16S rRNA at the A site. The chain is Small ribosomal subunit protein uS14 from Synechococcus sp. (strain CC9605).